We begin with the raw amino-acid sequence, 207 residues long: Cytochrome c biogenesis ATP-binding export protein CcmA (207 aa).

One can recognise an ABC transporter domain in the interval 4–207; it reads LEARELLCER…RISLTQTRAA (204 aa). 36 to 43 is a binding site for ATP; sequence GSNGAGKT.

It belongs to the ABC transporter superfamily. CcmA exporter (TC 3.A.1.107) family. As to quaternary structure, the complex is composed of two ATP-binding proteins (CcmA) and two transmembrane proteins (CcmB).

It localises to the cell inner membrane. It catalyses the reaction heme b(in) + ATP + H2O = heme b(out) + ADP + phosphate + H(+). Functionally, part of the ABC transporter complex CcmAB involved in the biogenesis of c-type cytochromes; once thought to export heme, this seems not to be the case, but its exact role is uncertain. Responsible for energy coupling to the transport system. The polypeptide is Cytochrome c biogenesis ATP-binding export protein CcmA (Shigella boydii serotype 4 (strain Sb227)).